The primary structure comprises 592 residues: ATP-binding protein Uup (592 aa).

2 ABC transporter domains span residues 1 to 221 (MPLI…RIEK) and 289 to 516 (FKLK…KSNI). Residues 36–43 (GKNGAGKS) and 321–328 (GNNGSGKS) each bind ATP. A coiled-coil region spans residues 516 to 550 (ISFLKTKQNQVKKELKKVLNEIEKIENSIKTLKIQ). Residues 518-592 (FLKTKQNQVK…IYWENLEKKL (75 aa)) are C-terminal domain (CTD), binds DNA.

Belongs to the ABC transporter superfamily. ABCF family. Uup subfamily.

The protein localises to the cytoplasm. The catalysed reaction is ATP + H2O = ADP + phosphate + H(+). Its function is as follows. Probably plays a role in ribosome assembly or function. May be involved in resolution of branched DNA intermediates that result from template switching in postreplication gaps. Binds DNA and has ATPase activity. This chain is ATP-binding protein Uup, found in Buchnera aphidicola subsp. Schizaphis graminum (strain Sg).